Reading from the N-terminus, the 977-residue chain is DNA-directed RNA polymerase 3A, chloroplastic (977 aa).

The transit peptide at 1–72 directs the protein to the chloroplast; the sequence is MASTASYSPS…NNIQSQTTVC (72 aa). Active-site residues include Asp678, Lys753, and Asp910.

It belongs to the phage and mitochondrial RNA polymerase family.

The protein localises to the plastid. It localises to the chloroplast. It carries out the reaction RNA(n) + a ribonucleoside 5'-triphosphate = RNA(n+1) + diphosphate. Its function is as follows. DNA-dependent RNA polymerase catalyzes the transcription of DNA into RNA using the four ribonucleoside triphosphates as substrates. This Nicotiana tabacum (Common tobacco) protein is DNA-directed RNA polymerase 3A, chloroplastic (RPOT3-SYL).